The sequence spans 422 residues: Proline-rich protein 22 (422 aa).

3 disordered regions span residues 1-35 (MQHP…PAPT), 306-325 (LCEV…SADD), and 363-422 (EEQP…ATPH). Positions 383 to 400 (GKRKASTAKKGKPGRKAR) are enriched in basic residues. The segment covering 413–422 (PREDLGATPH) has biased composition (basic and acidic residues).

In Homo sapiens (Human), this protein is Proline-rich protein 22 (PRR22).